We begin with the raw amino-acid sequence, 121 residues long: Large ribosomal subunit protein bL19 (121 aa).

The protein belongs to the bacterial ribosomal protein bL19 family.

In terms of biological role, this protein is located at the 30S-50S ribosomal subunit interface and may play a role in the structure and function of the aminoacyl-tRNA binding site. This Neisseria meningitidis serogroup C (strain 053442) protein is Large ribosomal subunit protein bL19.